Here is a 482-residue protein sequence, read N- to C-terminus: ATP synthase subunit beta (482 aa).

168–175 contributes to the ATP binding site; sequence GGAGVGKT.

It belongs to the ATPase alpha/beta chains family. As to quaternary structure, F-type ATPases have 2 components, CF(1) - the catalytic core - and CF(0) - the membrane proton channel. CF(1) has five subunits: alpha(3), beta(3), gamma(1), delta(1), epsilon(1). CF(0) has three main subunits: a(1), b(2) and c(9-12). The alpha and beta chains form an alternating ring which encloses part of the gamma chain. CF(1) is attached to CF(0) by a central stalk formed by the gamma and epsilon chains, while a peripheral stalk is formed by the delta and b chains.

The protein localises to the cell membrane. It carries out the reaction ATP + H2O + 4 H(+)(in) = ADP + phosphate + 5 H(+)(out). In terms of biological role, produces ATP from ADP in the presence of a proton gradient across the membrane. The catalytic sites are hosted primarily by the beta subunits. This is ATP synthase subunit beta from Corynebacterium urealyticum (strain ATCC 43042 / DSM 7109).